Reading from the N-terminus, the 189-residue chain is Protein GrpE (189 aa).

The segment covering 1–14 (MTDHTPLQPKHEIT) has biased composition (basic and acidic residues). Positions 1–23 (MTDHTPLQPKHEITDQADQDTSA) are disordered.

Belongs to the GrpE family. Homodimer.

It localises to the cytoplasm. Its function is as follows. Participates actively in the response to hyperosmotic and heat shock by preventing the aggregation of stress-denatured proteins, in association with DnaK and GrpE. It is the nucleotide exchange factor for DnaK and may function as a thermosensor. Unfolded proteins bind initially to DnaJ; upon interaction with the DnaJ-bound protein, DnaK hydrolyzes its bound ATP, resulting in the formation of a stable complex. GrpE releases ADP from DnaK; ATP binding to DnaK triggers the release of the substrate protein, thus completing the reaction cycle. Several rounds of ATP-dependent interactions between DnaJ, DnaK and GrpE are required for fully efficient folding. This Lawsonia intracellularis (strain PHE/MN1-00) protein is Protein GrpE.